Reading from the N-terminus, the 632-residue chain is Extracellular metalloproteinase 2 (632 aa).

The first 19 residues, 1–19, serve as a signal peptide directing secretion; that stretch reads MHGLLLAGLAAALPLGVAG. The propeptide occupies 20–244; the sequence is LPARQQSGLS…VHNVVDYVAS (225 aa). N-linked (GlcNAc...) asparagine glycosylation occurs at asparagine 270. Histidine 429 is a binding site for Zn(2+). The active site involves glutamate 430. Residue histidine 433 coordinates Zn(2+).

Belongs to the peptidase M36 family. The cofactor is Zn(2+).

The protein localises to the secreted. Its function is as follows. Secreted metalloproteinase that allows assimilation of proteinaceous substrates and probably acts as a virulence factor. In Arthroderma gypseum (strain ATCC MYA-4604 / CBS 118893) (Microsporum gypseum), this protein is Extracellular metalloproteinase 2 (MEP2).